Consider the following 156-residue polypeptide: Small ribosomal subunit protein uS7 (156 aa).

The protein belongs to the universal ribosomal protein uS7 family. In terms of assembly, part of the 30S ribosomal subunit. Contacts proteins S9 and S11.

In terms of biological role, one of the primary rRNA binding proteins, it binds directly to 16S rRNA where it nucleates assembly of the head domain of the 30S subunit. Is located at the subunit interface close to the decoding center, probably blocks exit of the E-site tRNA. This chain is Small ribosomal subunit protein uS7, found in Chlorobaculum parvum (strain DSM 263 / NCIMB 8327) (Chlorobium vibrioforme subsp. thiosulfatophilum).